We begin with the raw amino-acid sequence, 209 residues long: MPKGILGKKIGMTQIFNEAGVAIPVTVVEAGPCLVVQKRTPENDGYSAIQLGFGVKRENLLNKPTKGHLNKAGVRPVRFLRELKVDDLEAFQVGQEIKADIFAEGEKVDVVGTSKGKGFAGGIKRHNFHRGPMAHGSKYHRRPGSSAAKGPARTFKGRKLPGHYGVERVTVQNLQVVKVDPERNLLAIKGAVPGPRGGLLLVKNSVKVK.

The disordered stretch occupies residues 121-154 (GGIKRHNFHRGPMAHGSKYHRRPGSSAAKGPART).

Belongs to the universal ribosomal protein uL3 family. Part of the 50S ribosomal subunit. Forms a cluster with proteins L14 and L19.

Its function is as follows. One of the primary rRNA binding proteins, it binds directly near the 3'-end of the 23S rRNA, where it nucleates assembly of the 50S subunit. The sequence is that of Large ribosomal subunit protein uL3 from Desulforamulus reducens (strain ATCC BAA-1160 / DSM 100696 / MI-1) (Desulfotomaculum reducens).